Consider the following 249-residue polypeptide: Tetrahydromethanopterin S-methyltransferase subunit D (249 aa).

A run of 6 helical transmembrane segments spans residues 9–29, 47–67, 75–95, 138–158, 183–203, and 224–244; these read ILWL…VHFV, GTVQ…GFMM, LILA…MIVG, VSFV…ALVY, LVGI…VIPS, and AVIS…IAIS.

It belongs to the MtrD family. In terms of assembly, the complex is composed of 8 subunits; MtrA, MtrB, MtrC, MtrD, MtrE, MtrF, MtrG and MtrH.

The protein localises to the cell membrane. The catalysed reaction is 5-methyl-5,6,7,8-tetrahydromethanopterin + coenzyme M + 2 Na(+)(in) = 5,6,7,8-tetrahydromethanopterin + methyl-coenzyme M + 2 Na(+)(out). It functions in the pathway one-carbon metabolism; methanogenesis from CO(2); methyl-coenzyme M from 5,10-methylene-5,6,7,8-tetrahydromethanopterin: step 2/2. Its function is as follows. Part of a complex that catalyzes the formation of methyl-coenzyme M and tetrahydromethanopterin from coenzyme M and methyl-tetrahydromethanopterin. This is an energy-conserving, sodium-ion translocating step. The chain is Tetrahydromethanopterin S-methyltransferase subunit D from Methanosarcina acetivorans (strain ATCC 35395 / DSM 2834 / JCM 12185 / C2A).